The sequence spans 360 residues: Phosphoserine aminotransferase (360 aa).

Arginine 41 lines the L-glutamate pocket. Pyridoxal 5'-phosphate-binding residues include tryptophan 101, threonine 152, aspartate 172, and glutamine 195. An N6-(pyridoxal phosphate)lysine modification is found at lysine 196. 237-238 (NT) serves as a coordination point for pyridoxal 5'-phosphate.

The protein belongs to the class-V pyridoxal-phosphate-dependent aminotransferase family. SerC subfamily. As to quaternary structure, homodimer. Requires pyridoxal 5'-phosphate as cofactor.

It localises to the cytoplasm. It carries out the reaction O-phospho-L-serine + 2-oxoglutarate = 3-phosphooxypyruvate + L-glutamate. The enzyme catalyses 4-(phosphooxy)-L-threonine + 2-oxoglutarate = (R)-3-hydroxy-2-oxo-4-phosphooxybutanoate + L-glutamate. It functions in the pathway amino-acid biosynthesis; L-serine biosynthesis; L-serine from 3-phospho-D-glycerate: step 2/3. It participates in cofactor biosynthesis; pyridoxine 5'-phosphate biosynthesis; pyridoxine 5'-phosphate from D-erythrose 4-phosphate: step 3/5. Catalyzes the reversible conversion of 3-phosphohydroxypyruvate to phosphoserine and of 3-hydroxy-2-oxo-4-phosphonooxybutanoate to phosphohydroxythreonine. This chain is Phosphoserine aminotransferase, found in Burkholderia cenocepacia (strain ATCC BAA-245 / DSM 16553 / LMG 16656 / NCTC 13227 / J2315 / CF5610) (Burkholderia cepacia (strain J2315)).